The primary structure comprises 151 residues: Large ribosomal subunit protein bL9 (151 aa).

This sequence belongs to the bacterial ribosomal protein bL9 family.

Binds to the 23S rRNA. This is Large ribosomal subunit protein bL9 from Thermosipho melanesiensis (strain DSM 12029 / CIP 104789 / BI429).